The chain runs to 1186 residues: Pesticidal crystal protein Cry14Aa (1186 aa).

The protein belongs to the delta endotoxin family.

Its function is as follows. Promotes colloidosmotic lysis by binding to the midgut epithelial cells of insects. In Bacillus thuringiensis subsp. sotto, this protein is Pesticidal crystal protein Cry14Aa (cry14Aa).